The chain runs to 301 residues: Acetylglutamate kinase (301 aa).

Substrate is bound by residues G68–G69, R90, and N195.

Belongs to the acetylglutamate kinase family. ArgB subfamily.

The protein localises to the cytoplasm. The enzyme catalyses N-acetyl-L-glutamate + ATP = N-acetyl-L-glutamyl 5-phosphate + ADP. Its pathway is amino-acid biosynthesis; L-arginine biosynthesis; N(2)-acetyl-L-ornithine from L-glutamate: step 2/4. In terms of biological role, catalyzes the ATP-dependent phosphorylation of N-acetyl-L-glutamate. The polypeptide is Acetylglutamate kinase (Pseudomonas fluorescens (strain SBW25)).